Here is a 544-residue protein sequence, read N- to C-terminus: D-2-hydroxyglutarate dehydrogenase, mitochondrial (544 aa).

The transit peptide at Met1–Trp10 directs the protein to the mitochondrion. Positions Val119–Lys298 constitute an FAD-binding PCMH-type domain. Residue Lys124 is modified to N6-succinyllysine. 3 residues coordinate (R)-2-hydroxyglutarate: Arg409, Thr413, and Lys424. (R)-lactate is bound at residue Arg409. (R)-malate contacts are provided by Arg409, Thr413, and Lys424. Positions 457 and 464 each coordinate Zn(2+). Position 466 (Asn466) interacts with (R)-2-hydroxyglutarate. Glu498 lines the Zn(2+) pocket. Residue His499 participates in (R)-2-hydroxyglutarate binding. Position 499 (His499) interacts with (R)-lactate. (R)-malate is bound at residue His499.

This sequence belongs to the FAD-binding oxidoreductase/transferase type 4 family. Requires FAD as cofactor.

The protein resides in the mitochondrion. It carries out the reaction (R)-2-hydroxyglutarate + A = 2-oxoglutarate + AH2. It catalyses the reaction (R)-malate + A = oxaloacetate + AH2. With respect to regulation, activated by zinc and cobalt ions. Its function is as follows. Catalyzes the oxidation of D-2-hydroxyglutarate (D-2-HG) to alpha-ketoglutarate. Also catalyzes the oxidation of other D-2-hydroxyacids, such as D-malate (D-MAL) and D-lactate (D-LAC). Exhibits high activities towards D-2-HG and D-MAL but a very weak activity towards D-LAC. The chain is D-2-hydroxyglutarate dehydrogenase, mitochondrial (D2HGDH) from Bos taurus (Bovine).